Here is a 437-residue protein sequence, read N- to C-terminus: MEKWGILLLVTLSVSIIFTSAAADDYVRPKPRETLQFPWKQKSSSVPEQVHISLAGDKHMRVTWVTNDKSSPSFVEYGTSPGKYSYLGQGESTSYSYIMYRSGKIHHTVIGPLEADTVYYYRCGGEGPEFHLKTPPAQFPITFAVAGDLGQTGWTKSTLDHIDQCKYAVHLLPGDLSYADYMQHKWDTFGELVQPLASVRPWMVTQGNHEKESIPFIVDEFVSFNSRWKMPYEESGSNSNLYYSFEVAGVHAIMLGSYTDYDRYSDQYSWLKADLSKVDRERTPWLIVLFHVPWYNSNNAHQHEGDEMMAEMEPLLYASGVDIVFTGHVHAYERTKRVNNGKSDPCGPVHITIGDGGNREGLARKYKDPSPEWSVFREASFGHGELQMVNSTHALWTWHRNDDDEPTRSDEVWLNSLVNSGCLKKRPQELRKMLLEP.

An N-terminal signal peptide occupies residues 1–23 (MEKWGILLLVTLSVSIIFTSAAA). Fe cation-binding residues include Asp148, Asp175, and Tyr178. Asp175 serves as a coordination point for Zn(2+). Residues Asn208 and His291 each coordinate Zn(2+). Asn208 is a binding site for substrate. Residue His301 is the Proton donor of the active site. His328 serves as a coordination point for Zn(2+). 328-330 (HVH) contributes to the substrate binding site. His330 provides a ligand contact to Fe cation. Residue Asn390 is glycosylated (N-linked (GlcNAc...) asparagine).

It belongs to the metallophosphoesterase superfamily. Purple acid phosphatase family. Homodimer. Fe cation is required as a cofactor. The cofactor is Zn(2+). As to expression, expressed in roots, stems, leaves, flowers and siliques.

The protein resides in the secreted. It carries out the reaction a phosphate monoester + H2O = an alcohol + phosphate. In Arabidopsis thaliana (Mouse-ear cress), this protein is Purple acid phosphatase 18 (PAP18).